Here is a 221-residue protein sequence, read N- to C-terminus: 7-cyano-7-deazaguanine synthase (221 aa).

Residue 10-20 (FSGGQDSTTCL) coordinates ATP. Cys186, Cys195, Cys198, and Cys201 together coordinate Zn(2+).

This sequence belongs to the QueC family. In terms of assembly, homodimer. Zn(2+) is required as a cofactor.

The catalysed reaction is 7-carboxy-7-deazaguanine + NH4(+) + ATP = 7-cyano-7-deazaguanine + ADP + phosphate + H2O + H(+). Its pathway is purine metabolism; 7-cyano-7-deazaguanine biosynthesis. Its function is as follows. Catalyzes the ATP-dependent conversion of 7-carboxy-7-deazaguanine (CDG) to 7-cyano-7-deazaguanine (preQ(0)). This Geobacillus sp. (strain WCH70) protein is 7-cyano-7-deazaguanine synthase.